We begin with the raw amino-acid sequence, 106 residues long: Acylphosphatase-2 (106 aa).

Residues 16–106 (SVDYEVFGTV…LEYSDFSIRY (91 aa)) form the Acylphosphatase-like domain. Active-site residues include arginine 31 and asparagine 49. At serine 100 the chain carries Phosphoserine.

The protein belongs to the acylphosphatase family.

The catalysed reaction is an acyl phosphate + H2O = a carboxylate + phosphate + H(+). This is Acylphosphatase-2 (Acyp2) from Mus musculus (Mouse).